The primary structure comprises 695 residues: uncharacterized protein (695 aa).

Residue Ser-113 is modified to Phosphoserine. 12 consecutive transmembrane segments (helical) span residues 237–257 (FPLIFTFLLEQIFPMVCSLTV), 265–285 (LAAVSLASMTSNITLAIFEGI), 313–333 (IAFSLVIYIPFAVMWWYSEPL), 344–364 (INLTSRFLRVLILGAPAYIFF), 380–400 (GIYVLTICAPLNVLVSYTLVW), 408–428 (FIGAAIAVVLNFWLMFFLLLF), 457–477 (AFSGIIMLEAEELSYELLTLF), 488–508 (AQSAVSTMAALLYMIPFAIGI), 531–551 (QVGLSFSFIAGFINCCILVFG), 565–585 (VIKLIAQVLPLVGIVQNFDSL), 604–624 (IVNLMAYYLFGIPLALILSWF), and 633–653 (WIGIGSAMLLIGLVEAYYVLF). Over residues 673–688 (EVDSDEYLTDSDDPDE) the composition is skewed to acidic residues. The segment at 673–695 (EVDSDEYLTDSDDPDENTALLGA) is disordered.

It belongs to the multi antimicrobial extrusion (MATE) (TC 2.A.66.1) family.

It is found in the membrane. This is an uncharacterized protein from Saccharomyces cerevisiae (strain ATCC 204508 / S288c) (Baker's yeast).